Consider the following 509-residue polypeptide: MGLPWYRVHTVVLNDPGRLIAVHLMHTALVAGWAGSMALYEIAVFDPSDPVLNPMWRQGMFVLPFMVRLGITNSWGGWTINGENVTDPGFWSFEGVAAAHIGLSGLLFLAAIWHWVYWDLELFRDPRTGEPALDLPKMFGIHLFLSGLLCFGFGAFHLTGLFGPGMWVSDAYSITGRVQPVAPAWGPEGFNPFNPGGVVSHHIAAGIVGILAGLFHLSVRPPQRLYKALRMGNIETVLSSSISAVFFAAFIVAGTMWYGSAATPVELFGPTRYQWDQEYFHQEMERRVQKDVAAGASLSEAWNRIPAKLAFYDYIGNNPAKGGLFRAGPMNKGDGIAESWLGHATFKDKEGRELTVRRMPTFFETFPVVLIDKDGVLRADIPFRRAESKYSIEQMGVTVSFYGGKLDGQTFTDAPTVKKYARKAQLGEAFEFDRETLKSDGVFRSSARGWFTFGHASFALIFFFGHLWHGGRTLFRDVFAGIGEEVTEQVEFGAFQKVGDKTTRKQEAG.

The next 6 membrane-spanning stretches (helical) occupy residues 21–36 (AVHLMHTALVAGWAGS), 101–115 (IGLSGLLFLAAIWHW), 140–156 (GIHLFLSGLLCFGFGAF), 203–218 (IAAGIVGILAGLFHLS), 237–252 (VLSSSISAVFFAAFIV), and 457–472 (SFALIFFFGHLWHGGR).

The protein belongs to the PsbB/PsbC family. PsbB subfamily. In terms of assembly, PSII is composed of 1 copy each of membrane proteins PsbA, PsbB, PsbC, PsbD, PsbE, PsbF, PsbH, PsbI, PsbJ, PsbK, PsbL, PsbM, PsbT, PsbX, PsbY, PsbZ, Psb30/Ycf12, at least 3 peripheral proteins of the oxygen-evolving complex and a large number of cofactors. It forms dimeric complexes. Binds multiple chlorophylls. PSII binds additional chlorophylls, carotenoids and specific lipids. serves as cofactor.

Its subcellular location is the plastid. It localises to the cyanelle thylakoid membrane. One of the components of the core complex of photosystem II (PSII). It binds chlorophyll and helps catalyze the primary light-induced photochemical processes of PSII. PSII is a light-driven water:plastoquinone oxidoreductase, using light energy to abstract electrons from H(2)O, generating O(2) and a proton gradient subsequently used for ATP formation. This is Photosystem II CP47 reaction center protein from Cyanophora paradoxa.